Here is a 170-residue protein sequence, read N- to C-terminus: Mitochondrial fission 1 protein A (170 aa).

One copy of the TPR repeat lies at 90–123 (REKLYLLAVGYYRSGNYSRSRQLVDRCIEMQADW). A helical transmembrane segment spans residues 142–162 (VIGIGITATAFGAVGLIAGGI).

The protein belongs to the FIS1 family. As to quaternary structure, interacts with ARC5.

It localises to the mitochondrion outer membrane. It is found in the peroxisome membrane. Its function is as follows. Component of the peroxisomal and mitochondrial division machineries. Plays a role in promoting the fission of mitochondria and peroxisomes. The chain is Mitochondrial fission 1 protein A (FIS1A) from Arabidopsis thaliana (Mouse-ear cress).